Reading from the N-terminus, the 377-residue chain is Histone deacetylase 8 (377 aa).

The histone deacetylase stretch occupies residues 14-324; that stretch reads LPPVYIYSPE…WTYLTGVILG (311 aa). A Phosphoserine modification is found at S39. D101 is a binding site for substrate. Catalysis depends on H143, which acts as the Proton acceptor. Position 151 (G151) interacts with substrate. A divalent metal cation contacts are provided by D178, H180, and D267. Residue Y306 participates in substrate binding.

The protein belongs to the histone deacetylase family. HD type 1 subfamily. Interacts with CBFA2T3. Interacts with phosphorylated SMG5/EST1B; this interaction protects SMG5 from ubiquitin-mediated degradation. Associates with alpha-SMA (smooth muscle alpha-actin). The cofactor is a divalent metal cation. Post-translationally, phosphorylated by PKA on serine 39. Phosphorylation reduces deacetylase activity observed preferentially on histones H3 and H4.

It is found in the nucleus. The protein localises to the chromosome. It localises to the cytoplasm. It carries out the reaction N(6)-acetyl-L-lysyl-[histone] + H2O = L-lysyl-[histone] + acetate. It catalyses the reaction N(6)-acetyl-L-lysyl-[protein] + H2O = L-lysyl-[protein] + acetate. The enzyme catalyses N(6)-(2E)-butenoyl-L-lysyl-[protein] + H2O = (2E)-2-butenoate + L-lysyl-[protein]. Its activity is regulated as follows. Its activity is inhibited by trichostatin A (TSA) and butyrate, 2 well known histone deacetylase inhibitors. Functionally, histone deacetylase that catalyzes the deacetylation of lysine residues on the N-terminal part of the core histones (H2A, H2B, H3 and H4). Histone deacetylation gives a tag for epigenetic repression and plays an important role in transcriptional regulation, cell cycle progression and developmental events. Histone deacetylases act via the formation of large multiprotein complexes. Also involved in the deacetylation of cohesin complex protein SMC3 regulating release of cohesin complexes from chromatin. May play a role in smooth muscle cell contractility. In addition to protein deacetylase activity, also has protein-lysine deacylase activity: acts as a protein decrotonylase by mediating decrotonylation ((2E)-butenoyl) of histones. This is Histone deacetylase 8 (Hdac8) from Rattus norvegicus (Rat).